Consider the following 388-residue polypeptide: tRNA(Ile)-lysidine synthase (388 aa).

51–56 (SGGRDS) is an ATP binding site.

The protein belongs to the tRNA(Ile)-lysidine synthase family.

The protein resides in the cytoplasm. It carries out the reaction cytidine(34) in tRNA(Ile2) + L-lysine + ATP = lysidine(34) in tRNA(Ile2) + AMP + diphosphate + H(+). In terms of biological role, ligates lysine onto the cytidine present at position 34 of the AUA codon-specific tRNA(Ile) that contains the anticodon CAU, in an ATP-dependent manner. Cytidine is converted to lysidine, thus changing the amino acid specificity of the tRNA from methionine to isoleucine. This Bifidobacterium longum (strain DJO10A) protein is tRNA(Ile)-lysidine synthase.